The primary structure comprises 204 residues: MARVEAPQDALGRLIEALRVLPGVGPKSAQRMAFYLLQHDRNGAAVLAQSLGEAVDTVGHCARCNTFSETQICSTCADGRRDPSLLCIVETPADQVMVEQTLSFKGNYFVLMGRISPLDGMGPNEIHFDRLLTRIENPDTGVPIREVVLATNFTSEGEATAHYIGEVLKAKGIKVTRIARGIPVGGELEYVDAGTLARALMDRR.

Residues 61–76 (CARCNTFSETQICSTC) form a C4-type zinc finger. In terms of domain architecture, Toprim spans 84-183 (SLLCIVETPA…KVTRIARGIP (100 aa)).

This sequence belongs to the RecR family.

Its function is as follows. May play a role in DNA repair. It seems to be involved in an RecBC-independent recombinational process of DNA repair. It may act with RecF and RecO. The sequence is that of Recombination protein RecR from Polynucleobacter asymbioticus (strain DSM 18221 / CIP 109841 / QLW-P1DMWA-1) (Polynucleobacter necessarius subsp. asymbioticus).